We begin with the raw amino-acid sequence, 388 residues long: Na(+)/H(+) antiporter NhaA (388 aa).

Topologically, residues 1-11 are cytoplasmic; it reads MKHLHRFFSSD. Residues 12–31 form a helical membrane-spanning segment; the sequence is ASGGIILIIAAILAMIMANS. Over 32 to 58 the chain is Periplasmic; it reads GATSGWYHDFLETPVQLRVGSLEINKN. Residues 59–80 traverse the membrane as a helical segment; the sequence is MLLWINDALMAVFFLLVGLEVK. Residues 81–96 lie on the Cytoplasmic side of the membrane; that stretch reads RELMQGSLASLRQAAF. The chain crosses the membrane as a helical span at residues 97 to 116; that stretch reads PVIAAIGGMIVPALLYLAFN. Residues 117–122 lie on the Periplasmic side of the membrane; sequence YADPIT. Residues 123-130 form a helical membrane-spanning segment; that stretch reads REGWAIPA. The Cytoplasmic segment spans residues 131 to 154; it reads ATDIAFALGVLALLGSRVPLVLKI. A helical transmembrane segment spans residues 155-176; the sequence is FLMALAIIDDLGAIIIIALFYT. Topologically, residues 177–180 are periplasmic; that stretch reads NDLS. Residues 181-200 form a helical membrane-spanning segment; that stretch reads MASLGVAAVAIAVLAVLNLC. Residues 201–204 are Cytoplasmic-facing; sequence GVRR. A helical transmembrane segment spans residues 205–222; sequence TGVYILVGVVLWTAVLKS. A topological domain (periplasmic) is located at residue Gly223. The chain crosses the membrane as a helical span at residues 224–236; it reads VHATLAGVIVGFF. At 237 to 253 the chain is on the cytoplasmic side; that stretch reads IPLKEKHGRSPAKRLEH. A helical transmembrane segment spans residues 254–272; it reads VLHPWVAYLILPLFAFANA. Residues 273 to 286 lie on the Periplasmic side of the membrane; the sequence is GVSLQGVTLDGLTS. The chain crosses the membrane as a helical span at residues 287-310; it reads ILPLGIIAGLLIGKPLGISLFCWL. The Cytoplasmic segment spans residues 311 to 339; it reads ALRLKLAHLPEGTTYQQIMVVGILCGIGF. The helical transmembrane segment at 340-350 threads the bilayer; sequence TMSIFIASLAF. Topologically, residues 351–357 are periplasmic; the sequence is GSVDPEL. Residues 358 to 380 traverse the membrane as a helical segment; it reads INWAKLGILVGSISSAVIGYSWL. Over 381-388 the chain is Cytoplasmic; that stretch reads RVRLRPSV.

The protein belongs to the NhaA Na(+)/H(+) (TC 2.A.33) antiporter family.

It is found in the cell inner membrane. The enzyme catalyses Na(+)(in) + 2 H(+)(out) = Na(+)(out) + 2 H(+)(in). Its function is as follows. Na(+)/H(+) antiporter that extrudes sodium in exchange for external protons. In Shigella flexneri, this protein is Na(+)/H(+) antiporter NhaA.